Reading from the N-terminus, the 470-residue chain is ATP synthase subunit beta (470 aa).

157–164 (GGAGVGKT) is an ATP binding site.

This sequence belongs to the ATPase alpha/beta chains family. In terms of assembly, F-type ATPases have 2 components, CF(1) - the catalytic core - and CF(0) - the membrane proton channel. CF(1) has five subunits: alpha(3), beta(3), gamma(1), delta(1), epsilon(1). CF(0) has three main subunits: a(1), b(2) and c(9-12). The alpha and beta chains form an alternating ring which encloses part of the gamma chain. CF(1) is attached to CF(0) by a central stalk formed by the gamma and epsilon chains, while a peripheral stalk is formed by the delta and b chains.

Its subcellular location is the cell inner membrane. The catalysed reaction is ATP + H2O + 4 H(+)(in) = ADP + phosphate + 5 H(+)(out). Produces ATP from ADP in the presence of a proton gradient across the membrane. The catalytic sites are hosted primarily by the beta subunits. This is ATP synthase subunit beta from Geotalea daltonii (strain DSM 22248 / JCM 15807 / FRC-32) (Geobacter daltonii).